We begin with the raw amino-acid sequence, 292 residues long: Elongation factor Ts (292 aa).

The interval Thr-80–Val-83 is involved in Mg(2+) ion dislocation from EF-Tu.

The protein belongs to the EF-Ts family.

It localises to the cytoplasm. Functionally, associates with the EF-Tu.GDP complex and induces the exchange of GDP to GTP. It remains bound to the aminoacyl-tRNA.EF-Tu.GTP complex up to the GTP hydrolysis stage on the ribosome. This chain is Elongation factor Ts, found in Tolumonas auensis (strain DSM 9187 / NBRC 110442 / TA 4).